A 215-amino-acid polypeptide reads, in one-letter code: S-crystallin 2 (215 aa).

The 79-residue stretch at 2 to 80 (PSYTLNYFNH…YLAREFGFHG (79 aa)) folds into the GST N-terminal domain. In terms of domain architecture, GST C-terminal spans 82–215 (NNMEMARVEY…YLKKRSSTEF (134 aa)).

It belongs to the GST superfamily. Lens.

In terms of biological role, S-crystallins are structural components of squids and octopi eye lens. Contains relatively little if any GST activity. This chain is S-crystallin 2, found in Enteroctopus dofleini (North Pacific giant octopus).